The following is a 436-amino-acid chain: UPF0597 protein YhaM (436 aa).

Belongs to the UPF0597 family.

In Salmonella typhi, this protein is UPF0597 protein YhaM.